Consider the following 259-residue polypeptide: DNA utilization protein HofM (259 aa).

Functionally, required for the use of extracellular DNA as a nutrient. This Escherichia coli (strain K12) protein is DNA utilization protein HofM (hofM).